Here is a 256-residue protein sequence, read N- to C-terminus: RNA polymerase sigma factor SigI1 (256 aa).

A Polymerase core binding motif is present at residues 67–80; the sequence is DEFSIALSAFNEAI. A DNA-binding region (H-T-H motif) is located at residues 205-224; that stretch reads RNELKKKAKVHGRTIGNNRK.

The protein belongs to the sigma-70 factor family. SigI subfamily. In terms of assembly, interacts with RsgI1.

The protein resides in the cytoplasm. With respect to regulation, negatively regulated by the anti-sigma-I factor RsgI1. Binding of the polysaccharide substrate to RsgI1 may lead to the release and activation of SigI1. In terms of biological role, sigma factors are initiation factors that promote the attachment of RNA polymerase to specific initiation sites and are then released. This sigma factor is involved in regulation of cellulosomal genes via an external polysaccharide-sensing mechanism. SigI1 promotes transcription from sigI1 and celS promoters. This is RNA polymerase sigma factor SigI1 from Acetivibrio thermocellus (strain ATCC 27405 / DSM 1237 / JCM 9322 / NBRC 103400 / NCIMB 10682 / NRRL B-4536 / VPI 7372) (Clostridium thermocellum).